The sequence spans 161 residues: SsrA-binding protein (161 aa).

This sequence belongs to the SmpB family.

The protein resides in the cytoplasm. Required for rescue of stalled ribosomes mediated by trans-translation. Binds to transfer-messenger RNA (tmRNA), required for stable association of tmRNA with ribosomes. tmRNA and SmpB together mimic tRNA shape, replacing the anticodon stem-loop with SmpB. tmRNA is encoded by the ssrA gene; the 2 termini fold to resemble tRNA(Ala) and it encodes a 'tag peptide', a short internal open reading frame. During trans-translation Ala-aminoacylated tmRNA acts like a tRNA, entering the A-site of stalled ribosomes, displacing the stalled mRNA. The ribosome then switches to translate the ORF on the tmRNA; the nascent peptide is terminated with the 'tag peptide' encoded by the tmRNA and targeted for degradation. The ribosome is freed to recommence translation, which seems to be the essential function of trans-translation. In Vibrio campbellii (strain ATCC BAA-1116), this protein is SsrA-binding protein.